The following is a 102-amino-acid chain: Small ribosomal subunit protein uS10 (102 aa).

Belongs to the universal ribosomal protein uS10 family. In terms of assembly, part of the 30S ribosomal subunit.

In terms of biological role, involved in the binding of tRNA to the ribosomes. The chain is Small ribosomal subunit protein uS10 from Streptococcus pyogenes serotype M3 (strain SSI-1).